The following is a 273-amino-acid chain: Dermonecrotic toxin LdSicTox-alphaIB1av (273 aa).

The active site involves histidine 5. The Mg(2+) site is built by glutamate 25 and aspartate 27. Histidine 41 serves as the catalytic Nucleophile. Disulfide bonds link cysteine 45-cysteine 51 and cysteine 47-cysteine 190. A Mg(2+)-binding site is contributed by aspartate 85. An N-linked (GlcNAc...) asparagine glycan is attached at asparagine 250.

It belongs to the arthropod phospholipase D family. Class II subfamily. Requires Mg(2+) as cofactor. Expressed by the venom gland.

It is found in the secreted. The enzyme catalyses an N-(acyl)-sphingosylphosphocholine = an N-(acyl)-sphingosyl-1,3-cyclic phosphate + choline. It catalyses the reaction an N-(acyl)-sphingosylphosphoethanolamine = an N-(acyl)-sphingosyl-1,3-cyclic phosphate + ethanolamine. The catalysed reaction is a 1-acyl-sn-glycero-3-phosphocholine = a 1-acyl-sn-glycero-2,3-cyclic phosphate + choline. It carries out the reaction a 1-acyl-sn-glycero-3-phosphoethanolamine = a 1-acyl-sn-glycero-2,3-cyclic phosphate + ethanolamine. In terms of biological role, dermonecrotic toxins cleave the phosphodiester linkage between the phosphate and headgroup of certain phospholipids (sphingolipid and lysolipid substrates), forming an alcohol (often choline) and a cyclic phosphate. This toxin acts on sphingomyelin (SM). It may also act on ceramide phosphoethanolamine (CPE), lysophosphatidylcholine (LPC) and lysophosphatidylethanolamine (LPE), but not on lysophosphatidylserine (LPS), and lysophosphatidylglycerol (LPG). It acts by transphosphatidylation, releasing exclusively cyclic phosphate products as second products. Induces dermonecrosis, hemolysis, increased vascular permeability, edema, inflammatory response, and platelet aggregation. This Loxosceles deserta (Desert recluse spider) protein is Dermonecrotic toxin LdSicTox-alphaIB1av.